The sequence spans 357 residues: Phosphoribosylformylglycinamidine cyclo-ligase (357 aa).

This sequence belongs to the AIR synthase family.

The protein localises to the cytoplasm. The enzyme catalyses 2-formamido-N(1)-(5-O-phospho-beta-D-ribosyl)acetamidine + ATP = 5-amino-1-(5-phospho-beta-D-ribosyl)imidazole + ADP + phosphate + H(+). It functions in the pathway purine metabolism; IMP biosynthesis via de novo pathway; 5-amino-1-(5-phospho-D-ribosyl)imidazole from N(2)-formyl-N(1)-(5-phospho-D-ribosyl)glycinamide: step 2/2. The chain is Phosphoribosylformylglycinamidine cyclo-ligase from Rhizobium etli (strain CIAT 652).